Reading from the N-terminus, the 438-residue chain is MQKENKQLCLISLGCSKNLVDSEVMLGKLYNYTLTNDAKSADVILINTCGFIESAKQESIQTILNAAKDKKEGTLLIASGCLSERYKDEIKELIPEVDIFTGVGDYDKIDILIAKKQNQFSEQVFLSEHYNARVITGSSVHAYVKISEGCNQKCSFCAIPSFKGKLHSRELDSILKEVEDLVLKGYKDMTFIAQDSSSFLYDKGQKDGLIQLISAIDKQQALRSARILYLYPSSTTLELIGAIENSPIFQNYFDMPIQHISDSMLKKMRRNSSQAHHLKLLNAMKQVQESFIRSTIIVGHPEENEGEFEELSAFLDEFQFDRLNIFAFSAEENTHAYSLEKVPKKIINARIKALNKIALKHQHNSFKALLNKPIKALVENKEGEYFYKARDLRWAPEVDGEILINDSELNTPLKPGHYTIVPSAFKDNILLAKVLSPF.

Residues 6–118 (KQLCLISLGC…IDILIAKKQN (113 aa)) enclose the MTTase N-terminal domain. Positions 15, 49, 81, 150, 154, and 157 each coordinate [4Fe-4S] cluster. The region spanning 136–364 (TGSSVHAYVK…NKIALKHQHN (229 aa)) is the Radical SAM core domain.

This sequence belongs to the methylthiotransferase family. RimO subfamily. [4Fe-4S] cluster is required as a cofactor.

It is found in the cytoplasm. It carries out the reaction L-aspartate(89)-[ribosomal protein uS12]-hydrogen + (sulfur carrier)-SH + AH2 + 2 S-adenosyl-L-methionine = 3-methylsulfanyl-L-aspartate(89)-[ribosomal protein uS12]-hydrogen + (sulfur carrier)-H + 5'-deoxyadenosine + L-methionine + A + S-adenosyl-L-homocysteine + 2 H(+). Catalyzes the methylthiolation of an aspartic acid residue of ribosomal protein uS12. This is Ribosomal protein uS12 methylthiotransferase RimO from Helicobacter acinonychis (strain Sheeba).